We begin with the raw amino-acid sequence, 430 residues long: Histidinol dehydrogenase (430 aa).

Residues Y129, Q190, and N213 each contribute to the NAD(+) site. S236, Q258, and H261 together coordinate substrate. Zn(2+)-binding residues include Q258 and H261. Active-site proton acceptor residues include E326 and H327. The substrate site is built by H327, D360, E414, and H419. D360 lines the Zn(2+) pocket. H419 provides a ligand contact to Zn(2+).

This sequence belongs to the histidinol dehydrogenase family. Zn(2+) serves as cofactor.

The catalysed reaction is L-histidinol + 2 NAD(+) + H2O = L-histidine + 2 NADH + 3 H(+). It participates in amino-acid biosynthesis; L-histidine biosynthesis; L-histidine from 5-phospho-alpha-D-ribose 1-diphosphate: step 9/9. Functionally, catalyzes the sequential NAD-dependent oxidations of L-histidinol to L-histidinaldehyde and then to L-histidine. This chain is Histidinol dehydrogenase, found in Gluconobacter oxydans (strain 621H) (Gluconobacter suboxydans).